The sequence spans 301 residues: Mitochondrial thiamine pyrophosphate carrier 1 (301 aa).

3 Solcar repeats span residues 15–102 (VTPT…ISKS), 115–200 (SSAN…AREL), and 206–293 (RVPF…SLSF). Helical transmembrane passes span 20 to 38 (ALVAGSIAGAISRAFTAPL), 79 to 99 (VPAEILYILYGGVQFGSYSII), 121 to 141 (LIVGIGSGIVSTLVTYPFDLL), 172 to 192 (IYAGIRPAMLSVSSTTGLMFW), 207 to 227 (VPFIEAICGFIAGATSKGITF), and 252 to 272 (IFVTILKNEGVFGLYKGFGIS).

The protein belongs to the mitochondrial carrier (TC 2.A.29) family.

Its subcellular location is the mitochondrion inner membrane. In terms of biological role, mitochondrial transporter that mediates uptake of thiamine pyrophosphate (ThPP) into mitochondria. This Candida albicans (strain SC5314 / ATCC MYA-2876) (Yeast) protein is Mitochondrial thiamine pyrophosphate carrier 1 (TPC1).